A 487-amino-acid polypeptide reads, in one-letter code: Protein nucleotidyltransferase YdiU (487 aa).

Gly90, Gly92, Arg93, Lys113, Asp125, Gly126, Arg176, and Arg183 together coordinate ATP. Asp252 functions as the Proton acceptor in the catalytic mechanism. Residues Asn253 and Asp262 each contribute to the Mg(2+) site. An ATP-binding site is contributed by Asp262.

This sequence belongs to the SELO family. Mg(2+) serves as cofactor. The cofactor is Mn(2+).

The catalysed reaction is L-seryl-[protein] + ATP = 3-O-(5'-adenylyl)-L-seryl-[protein] + diphosphate. It catalyses the reaction L-threonyl-[protein] + ATP = 3-O-(5'-adenylyl)-L-threonyl-[protein] + diphosphate. It carries out the reaction L-tyrosyl-[protein] + ATP = O-(5'-adenylyl)-L-tyrosyl-[protein] + diphosphate. The enzyme catalyses L-histidyl-[protein] + UTP = N(tele)-(5'-uridylyl)-L-histidyl-[protein] + diphosphate. The catalysed reaction is L-seryl-[protein] + UTP = O-(5'-uridylyl)-L-seryl-[protein] + diphosphate. It catalyses the reaction L-tyrosyl-[protein] + UTP = O-(5'-uridylyl)-L-tyrosyl-[protein] + diphosphate. Functionally, nucleotidyltransferase involved in the post-translational modification of proteins. It can catalyze the addition of adenosine monophosphate (AMP) or uridine monophosphate (UMP) to a protein, resulting in modifications known as AMPylation and UMPylation. This chain is Protein nucleotidyltransferase YdiU, found in Azotobacter vinelandii (strain DJ / ATCC BAA-1303).